The following is a 105-amino-acid chain: Cytochrome c-553-like (105 aa).

Residues 1-29 (MAGIVSLVILAVALFSFMNFDPYVSQVLA) form the signal peptide. Heme c contacts are provided by cysteine 45, cysteine 48, histidine 49, and methionine 85.

In terms of processing, binds 1 heme c group covalently per subunit.

The protein is Cytochrome c-553-like (cytM) of Synechocystis sp. (strain ATCC 27184 / PCC 6803 / Kazusa).